Reading from the N-terminus, the 431-residue chain is Glutamyl-tRNA(Gln) amidotransferase subunit A (431 aa).

Active-site charge relay system residues include K55 and S130. Residue S154 is the Acyl-ester intermediate of the active site.

It belongs to the amidase family. GatA subfamily. In terms of assembly, heterotrimer of A, B and C subunits.

It catalyses the reaction L-glutamyl-tRNA(Gln) + L-glutamine + ATP + H2O = L-glutaminyl-tRNA(Gln) + L-glutamate + ADP + phosphate + H(+). Functionally, allows the formation of correctly charged Gln-tRNA(Gln) through the transamidation of misacylated Glu-tRNA(Gln) in organisms which lack glutaminyl-tRNA synthetase. The reaction takes place in the presence of glutamine and ATP through an activated gamma-phospho-Glu-tRNA(Gln). The sequence is that of Glutamyl-tRNA(Gln) amidotransferase subunit A from Methanococcus vannielii (strain ATCC 35089 / DSM 1224 / JCM 13029 / OCM 148 / SB).